The chain runs to 391 residues: Processive diacylglycerol beta-glucosyltransferase (391 aa).

The protein belongs to the glycosyltransferase 28 family. UgtP subfamily.

It is found in the cell membrane. The enzyme catalyses a 1,2-diacyl-3-O-(beta-D-glucopyranosyl)-sn-glycerol + UDP-alpha-D-glucose = a 1,2-diacyl-3-O-(beta-D-Glc-(1-&gt;6)-beta-D-Glc)-sn-glycerol + UDP + H(+). It carries out the reaction a 1,2-diacyl-sn-glycerol + UDP-alpha-D-glucose = a 1,2-diacyl-3-O-(beta-D-glucopyranosyl)-sn-glycerol + UDP + H(+). It functions in the pathway glycolipid metabolism; diglucosyl-diacylglycerol biosynthesis. Its function is as follows. Processive glucosyltransferase involved in the biosynthesis of both the bilayer- and non-bilayer-forming membrane glucolipids. Is able to successively transfer two glucosyl residues to diacylglycerol (DAG), thereby catalyzing the formation of beta-monoglucosyl-DAG (3-O-(beta-D-glucopyranosyl)-1,2-diacyl-sn-glycerol) and beta-diglucosyl-DAG (3-O-(beta-D-glucopyranosyl-beta-(1-&gt;6)-D-glucopyranosyl)-1,2-diacyl-sn-glycerol). Beta-diglucosyl-DAG is the predominant glycolipid found in Bacillales and is also used as a membrane anchor for lipoteichoic acid (LTA). This Staphylococcus haemolyticus (strain JCSC1435) protein is Processive diacylglycerol beta-glucosyltransferase.